Consider the following 189-residue polypeptide: Potassium-transporting ATPase KdpC subunit (189 aa).

The helical transmembrane segment at 5–25 threads the bilayer; it reads LLPALTMLLVFTVITGIVYPL.

The protein belongs to the KdpC family. As to quaternary structure, the system is composed of three essential subunits: KdpA, KdpB and KdpC.

The protein resides in the cell membrane. Functionally, part of the high-affinity ATP-driven potassium transport (or Kdp) system, which catalyzes the hydrolysis of ATP coupled with the electrogenic transport of potassium into the cytoplasm. This subunit acts as a catalytic chaperone that increases the ATP-binding affinity of the ATP-hydrolyzing subunit KdpB by the formation of a transient KdpB/KdpC/ATP ternary complex. This is Potassium-transporting ATPase KdpC subunit from Mycobacterium bovis (strain ATCC BAA-935 / AF2122/97).